Here is a 400-residue protein sequence, read N- to C-terminus: 1-deoxy-D-xylulose 5-phosphate reductoisomerase (400 aa).

7 residues coordinate NADPH: Thr10, Gly11, Ser12, Ile13, Gly36, Asn38, and Asn124. Lys125 is a 1-deoxy-D-xylulose 5-phosphate binding site. Glu126 lines the NADPH pocket. A Mn(2+)-binding site is contributed by Asp150. Ser151, Glu152, Ser186, and His209 together coordinate 1-deoxy-D-xylulose 5-phosphate. A Mn(2+)-binding site is contributed by Glu152. Residue Gly215 coordinates NADPH. 1-deoxy-D-xylulose 5-phosphate-binding residues include Ser222, Asn227, Lys228, and Glu231. Glu231 serves as a coordination point for Mn(2+).

The protein belongs to the DXR family. It depends on Mg(2+) as a cofactor. The cofactor is Mn(2+).

It carries out the reaction 2-C-methyl-D-erythritol 4-phosphate + NADP(+) = 1-deoxy-D-xylulose 5-phosphate + NADPH + H(+). It functions in the pathway isoprenoid biosynthesis; isopentenyl diphosphate biosynthesis via DXP pathway; isopentenyl diphosphate from 1-deoxy-D-xylulose 5-phosphate: step 1/6. Catalyzes the NADPH-dependent rearrangement and reduction of 1-deoxy-D-xylulose-5-phosphate (DXP) to 2-C-methyl-D-erythritol 4-phosphate (MEP). This chain is 1-deoxy-D-xylulose 5-phosphate reductoisomerase, found in Aliivibrio fischeri (strain ATCC 700601 / ES114) (Vibrio fischeri).